Here is an 80-residue protein sequence, read N- to C-terminus: Type VII secretion system accessory factor EsaB (80 aa).

Belongs to the EsaB family.

The protein resides in the cytoplasm. Its function is as follows. Seems to regulate secreted factors that contribute to the establishment of persistent infections in the host. The protein is Type VII secretion system accessory factor EsaB of Staphylococcus aureus (strain COL).